A 592-amino-acid polypeptide reads, in one-letter code: Putative amidase ARB_02965 (592 aa).

Residues 1–21 (MKGPITFLLQLGAVYTSIASA) form the signal peptide. Residue Asn-120 is glycosylated (N-linked (GlcNAc...) asparagine). Lys-161 acts as the Charge relay system in catalysis. An N-linked (GlcNAc...) asparagine glycan is attached at Asn-217. The active-site Charge relay system is Ser-242. Substrate-binding positions include Ser-242 and 263 to 266 (TSGS). Ser-266 serves as the catalytic Acyl-ester intermediate. N-linked (GlcNAc...) asparagine glycans are attached at residues Asn-326, Asn-430, and Asn-528.

The protein belongs to the amidase family.

Its subcellular location is the secreted. The chain is Putative amidase ARB_02965 from Arthroderma benhamiae (strain ATCC MYA-4681 / CBS 112371) (Trichophyton mentagrophytes).